A 119-amino-acid polypeptide reads, in one-letter code: Beta-2-microglobulin (119 aa).

The N-terminal stretch at 1–20 (MARFVVVALLVLLSLSGLEA) is a signal peptide. One can recognise an Ig-like C1-type domain in the interval 25 to 114 (PKIQVYSRHP…VTLSTPKTVK (90 aa)). The cysteines at positions 45 and 100 are disulfide-linked.

The protein belongs to the beta-2-microglobulin family. Heterodimer of an alpha chain and a beta chain. Beta-2-microglobulin is the beta-chain of major histocompatibility complex class I molecules.

The protein localises to the secreted. Its function is as follows. Component of the class I major histocompatibility complex (MHC). Involved in the presentation of peptide antigens to the immune system. In Aotus lemurinus (Gray-bellied night monkey), this protein is Beta-2-microglobulin (B2M).